The primary structure comprises 514 residues: Nitric oxide reductase transcription regulator NorR1 (514 aa).

A 4-aspartylphosphate modification is found at Asp54. The 230-residue stretch at 187–416 (IIGQSQAIAG…LEHVISRAAL (230 aa)) folds into the Sigma-54 factor interaction domain. Residues 215–222 (GETGVGKE) and 287–296 (EVGELPLSIQ) contribute to the ATP site. The segment at residues 490 to 509 (WAKAARQLGMDASNLHKLAK) is a DNA-binding region (H-T-H motif).

The protein operates within nitrogen metabolism; nitrate reduction (denitrification) [regulation]. Functionally, required for the nitric oxide (NO) induced expression of NO reductase. Not required for expression of 2 other pathway members, nitrate reductase (nirS) and nitrous oxide reductase (nosZ). In Cupriavidus necator (strain ATCC 17699 / DSM 428 / KCTC 22496 / NCIMB 10442 / H16 / Stanier 337) (Ralstonia eutropha), this protein is Nitric oxide reductase transcription regulator NorR1 (norR1).